Here is a 263-residue protein sequence, read N- to C-terminus: Small ribosomal subunit protein uS2 (263 aa).

An N-acetylserine modification is found at serine 2. Residues 213–223 (NAAEEARAGAT) show a composition bias toward low complexity. Positions 213–245 (NAAEEARAGATEETEEVVAEAETEWNTETNVED) are disordered. The segment covering 224–245 (EETEEVVAEAETEWNTETNVED) has biased composition (acidic residues).

This sequence belongs to the universal ribosomal protein uS2 family. In terms of assembly, component of the small ribosomal subunit. Mature ribosomes consist of a small (40S) and a large (60S) subunit. The 40S subunit contains about 33 different proteins and 1 molecule of RNA (18S). The 60S subunit contains about 49 different proteins and 3 molecules of RNA (25S, 5.8S and 5S). Interacts with RPS21.

The protein localises to the cytoplasm. Its function is as follows. Required for the assembly and/or stability of the 40S ribosomal subunit. Required for the processing of the 20S rRNA-precursor to mature 18S rRNA in a late step of the maturation of 40S ribosomal subunits. In Clavispora lusitaniae (strain ATCC 42720) (Yeast), this protein is Small ribosomal subunit protein uS2.